Here is a 485-residue protein sequence, read N- to C-terminus: Membrane-bound lytic murein transglycosylase F (485 aa).

Residues 1–29 form the signal peptide; the sequence is MFAHTALRQRCAKWLFATGLFLLLGACVE. Residues 30-267 form a non-LT domain region; that stretch reads KPSTLERVKE…RLKDRYYGHV (238 aa). An LT domain region spans residues 268–485; sequence DVLGYVGAYT…DKPAEQSPPM (218 aa). Residue Glu-314 is part of the active site. The disordered stretch occupies residues 465 to 485; the sequence is EGNLHVPGVNKDKPAEQSPPM.

It in the N-terminal section; belongs to the bacterial solute-binding protein 3 family. This sequence in the C-terminal section; belongs to the transglycosylase Slt family.

The protein resides in the cell outer membrane. It catalyses the reaction Exolytic cleavage of the (1-&gt;4)-beta-glycosidic linkage between N-acetylmuramic acid (MurNAc) and N-acetylglucosamine (GlcNAc) residues in peptidoglycan, from either the reducing or the non-reducing ends of the peptidoglycan chains, with concomitant formation of a 1,6-anhydrobond in the MurNAc residue.. Its function is as follows. Murein-degrading enzyme that degrades murein glycan strands and insoluble, high-molecular weight murein sacculi, with the concomitant formation of a 1,6-anhydromuramoyl product. Lytic transglycosylases (LTs) play an integral role in the metabolism of the peptidoglycan (PG) sacculus. Their lytic action creates space within the PG sacculus to allow for its expansion as well as for the insertion of various structures such as secretion systems and flagella. The protein is Membrane-bound lytic murein transglycosylase F of Pseudomonas putida (strain W619).